The chain runs to 375 residues: DnaJ homolog subfamily B member 12 (375 aa).

N-acetylmethionine is present on methionine 1. Over 1 to 243 (MESNKDEAER…DRRDNQGDGG (243 aa)) the chain is Cytoplasmic. Residues 45-92 (ALIESLNQKPQTAGDQPPPTDTTHATHRKAGGTDAPSANGEAGGESTK) form a disordered region. The segment covering 49 to 58 (SLNQKPQTAG) has biased composition (polar residues). Residues 112 to 176 (YEILGVSRGA…RKQYDQFGDD (65 aa)) form the J domain. Histidine 185 carries the pros-methylhistidine modification. Residues 244–264 (LGVFVQLMPILILILVSALSQ) traverse the membrane as a helical segment. Topologically, residues 265–375 (LMVSSPPYSL…LSEVQASLHG (111 aa)) are lumenal.

The protein belongs to the DnaJ family. DNAJB12/DNAJB14 subfamily. In terms of assembly, homodimer and homotetramer. Interacts (via J domain) with HSPA8/Hsc70. Forms a multiprotein complex, at least composed of DNAJB12, DNAJB14, HSPA8/Hsc70 and SGTA; interaction with DNAJB14 and HSPA8/Hsc70 is direct. Methylated at His-185 by METTL9.

The protein resides in the endoplasmic reticulum membrane. It localises to the nucleus membrane. In terms of biological role, acts as a co-chaperone with HSPA8/Hsc70; required to promote protein folding and trafficking, prevent aggregation of client proteins, and promote unfolded proteins to endoplasmic reticulum-associated degradation (ERAD) pathway. Acts by determining HSPA8/Hsc70's ATPase and polypeptide-binding activities. Can also act independently of HSPA8/Hsc70: together with DNAJB14, acts as a chaperone that promotes maturation of potassium channels KCND2 and KCNH2 by stabilizing nascent channel subunits and assembling them into tetramers. While stabilization of nascent channel proteins is dependent on HSPA8/Hsc70, the process of oligomerization of channel subunits is independent of HSPA8/Hsc70. When overexpressed, forms membranous structures together with DNAJB14 and HSPA8/Hsc70 within the nucleus; the role of these structures, named DJANGOs, is still unclear. (Microbial infection) In case of infection by polyomavirus, involved in the virus endoplasmic reticulum membrane penetration and infection. The chain is DnaJ homolog subfamily B member 12 from Homo sapiens (Human).